We begin with the raw amino-acid sequence, 86 residues long: Neurotoxin LmNaTx35.2 (86 aa).

Positions 1–21 (MQLKIQLLMLVLMTVLTGVLG) are cleaved as a signal peptide. One can recognise an LCN-type CS-alpha/beta domain in the interval 22 to 85 (KDGYVVHEDT…VYGDKGTYCW (64 aa)). Intrachain disulfides connect cysteine 33–cysteine 84, cysteine 37–cysteine 60, cysteine 46–cysteine 65, and cysteine 50–cysteine 67.

The protein belongs to the long (4 C-C) scorpion toxin superfamily. Sodium channel inhibitor family. Alpha subfamily. Expressed by the venom gland.

The protein resides in the secreted. Binds voltage-independently at site-3 of voltage-gated sodium channels (Nav) and inhibits the inactivation of the activated channels, thereby blocking neuronal transmission. The chain is Neurotoxin LmNaTx35.2 from Lychas mucronatus (Chinese swimming scorpion).